Consider the following 475-residue polypeptide: Ribulose bisphosphate carboxylase large chain (475 aa).

Residues 1–2 (MS) constitute a propeptide that is removed on maturation. Position 3 is an N-acetylproline (proline 3). Lysine 14 carries the post-translational modification N6,N6,N6-trimethyllysine. The substrate site is built by asparagine 123 and threonine 173. Lysine 175 (proton acceptor) is an active-site residue. Lysine 177 is a substrate binding site. Residues lysine 201, aspartate 203, and glutamate 204 each contribute to the Mg(2+) site. Lysine 201 carries the post-translational modification N6-carboxylysine. Histidine 294 serves as the catalytic Proton acceptor. Residues arginine 295, histidine 327, and serine 379 each contribute to the substrate site.

This sequence belongs to the RuBisCO large chain family. Type I subfamily. In terms of assembly, heterohexadecamer of 8 large chains and 8 small chains; disulfide-linked. The disulfide link is formed within the large subunit homodimers. The cofactor is Mg(2+). The disulfide bond which can form in the large chain dimeric partners within the hexadecamer appears to be associated with oxidative stress and protein turnover.

It is found in the plastid. Its subcellular location is the chloroplast. It catalyses the reaction 2 (2R)-3-phosphoglycerate + 2 H(+) = D-ribulose 1,5-bisphosphate + CO2 + H2O. It carries out the reaction D-ribulose 1,5-bisphosphate + O2 = 2-phosphoglycolate + (2R)-3-phosphoglycerate + 2 H(+). Its function is as follows. RuBisCO catalyzes two reactions: the carboxylation of D-ribulose 1,5-bisphosphate, the primary event in carbon dioxide fixation, as well as the oxidative fragmentation of the pentose substrate in the photorespiration process. Both reactions occur simultaneously and in competition at the same active site. The polypeptide is Ribulose bisphosphate carboxylase large chain (Picea abies (Norway spruce)).